A 310-amino-acid chain; its full sequence is Methionyl-tRNA formyltransferase (310 aa).

(6S)-5,6,7,8-tetrahydrofolate is bound at residue 111-114 (SLLP).

It belongs to the Fmt family.

It carries out the reaction L-methionyl-tRNA(fMet) + (6R)-10-formyltetrahydrofolate = N-formyl-L-methionyl-tRNA(fMet) + (6S)-5,6,7,8-tetrahydrofolate + H(+). Its function is as follows. Attaches a formyl group to the free amino group of methionyl-tRNA(fMet). The formyl group appears to play a dual role in the initiator identity of N-formylmethionyl-tRNA by promoting its recognition by IF2 and preventing the misappropriation of this tRNA by the elongation apparatus. The polypeptide is Methionyl-tRNA formyltransferase (Rhodopseudomonas palustris (strain ATCC BAA-98 / CGA009)).